A 61-amino-acid polypeptide reads, in one-letter code: UPF0181 protein KPN78578_22920 (61 aa).

It belongs to the UPF0181 family.

The chain is UPF0181 protein KPN78578_22920 from Klebsiella pneumoniae subsp. pneumoniae (strain ATCC 700721 / MGH 78578).